Here is a 376-residue protein sequence, read N- to C-terminus: Lipoprotein p33 (376 aa).

The N-terminal stretch at 1-30 (MKIKKIKLLKALALTGAFGIVATVPVIVYS) is a signal peptide. Cys-31 is lipidated: N-palmitoyl cysteine. Cys-31 is lipidated: S-diacylglycerol cysteine. The segment at 35 to 59 (DNNGGTGDNNTGGGGSGTDQQQGTT) is disordered. Positions 38–51 (GGTGDNNTGGGGSG) are enriched in gly residues.

The protein belongs to the p35 lipoprotein family.

The protein localises to the cell membrane. The chain is Lipoprotein p33 from Malacoplasma penetrans (Mycoplasma penetrans).